Consider the following 156-residue polypeptide: Persephin (156 aa).

The first 21 residues, 1–21 (MAAGRLRILCLLLLSLHPSLG), serve as a signal peptide directing secretion. 3 disulfide bridges follow: C66/C124, C93/C152, and C97/C154.

Belongs to the TGF-beta family. GDNF subfamily. In terms of assembly, homodimer; disulfide-linked. Interacts with GFRA4 coreceptor and RET: forms a 2:2:2 ternary complex composed of PSPN ligand, GFRA4 and RET receptor.

The protein localises to the secreted. Its function is as follows. Growth factor that exhibits neurotrophic activity on mesencephalic dopaminergic and motor neurons. Acts by binding to its coreceptor, GFRA4, leading to autophosphorylation and activation of the RET receptor. The chain is Persephin from Mus musculus (Mouse).